Reading from the N-terminus, the 469-residue chain is Adenosylhomocysteinase (469 aa).

The substrate site is built by T63, D139, and E164. 165–167 (TTT) serves as a coordination point for NAD(+). 2 residues coordinate substrate: K194 and D198. NAD(+) is bound by residues N199, 228–233 (GYGDVG), E251, N300, 321–323 (IGH), and N375.

It belongs to the adenosylhomocysteinase family. Requires NAD(+) as cofactor.

The protein localises to the cytoplasm. The catalysed reaction is S-adenosyl-L-homocysteine + H2O = L-homocysteine + adenosine. The protein operates within amino-acid biosynthesis; L-homocysteine biosynthesis; L-homocysteine from S-adenosyl-L-homocysteine: step 1/1. Functionally, may play a key role in the regulation of the intracellular concentration of adenosylhomocysteine. The polypeptide is Adenosylhomocysteinase (Pseudomonas syringae pv. tomato (strain ATCC BAA-871 / DC3000)).